A 720-amino-acid polypeptide reads, in one-letter code: NAD(+) hydrolase ApTIR (720 aa).

One can recognise a TIR domain in the interval 1 to 131 (MRYDAFISYS…AVPPALRGVF (131 aa)). NAD(+) contacts are provided by residues 10 to 11 (SH) and Ala48. Glu84 is an active-site residue. Residues 192–211 (GALAVVCALLLLVAGTAVAW) traverse the membrane as a helical segment. Disordered regions lie at residues 231–275 (ATAA…AVAE) and 292–359 (EGIA…EEAV). Basic and acidic residues-rich tracts occupy residues 256 to 268 (EQQRAQKAAEEAR) and 307 to 359 (AEAR…EEAV). The stretch at 313–362 (RGVADAEKAKANRAAAEAERQRKIAADEQRKAHEAAAEAERQREEAVKQQ) forms a coiled coil. WD repeat units follow at residues 420 to 459 (GHTAVVSAVALSGDGRTLVTDGLDGTVMVWDPTDRAAPRR), 465 to 504 (SSTAPVYTVALSGDGRTLVTGSEDGTAMVWDLTDRAAPRR), 510 to 549 (GHTDVVDAVALSGDGRTLATGSFDGTAMVWDVTDRAAPRR), 555 to 594 (DHTAPVTAVALSGDGRTLATGSDDHTAMVWDLTDRAAPRR), 600 to 639 (GHTAGVDAVALSGDGRTLATGSYDGTAMLWDLTDRAAPRR), 645 to 684 (GHTAQVYTVALSRDGRTLATGSEDHTAMVWDLTDRAAPRR), and 690 to 720 (GHTDAVDAVALSGDGRTLATAASITRRCCGM).

Its subcellular location is the cell membrane. It carries out the reaction NAD(+) + H2O = ADP-D-ribose + nicotinamide + H(+). NAD(+) hydrolase (NADase) that catalyzes cleavage of NAD(+) into ADP-D-ribose (ADPR) and nicotinamide. This is NAD(+) hydrolase ApTIR from Actinoplanes sp. (strain ATCC 31044 / CBS 674.73 / SE50/110).